A 245-amino-acid chain; its full sequence is MAGHSKWANIKHRKGKADAKKGKIFSRIAKEIISAVKLGGADQKNNPRLRLALQKARDANMPNENIDRNIKKASSADQEDYHEMTYELYGHGGVGIVVDVMTDNKNRISSDMRIATNKRGGTVATPGAVTFNFDRKGILQISKKNAIEEELFLAATEAGAEDFEVDNDVFIITTDPSHLYSVKDAINHLGFACEEAELGMIPRTYVECSVETAKDNLALIEWLEELEDVDAVYHNMKIPEELENE.

It belongs to the TACO1 family.

Its subcellular location is the cytoplasm. The chain is Probable transcriptional regulatory protein pc1328 from Protochlamydia amoebophila (strain UWE25).